The chain runs to 456 residues: Histidine--tRNA ligase (456 aa).

Belongs to the class-II aminoacyl-tRNA synthetase family. As to quaternary structure, homodimer.

It is found in the cytoplasm. The catalysed reaction is tRNA(His) + L-histidine + ATP = L-histidyl-tRNA(His) + AMP + diphosphate + H(+). The polypeptide is Histidine--tRNA ligase (Christiangramia forsetii (strain DSM 17595 / CGMCC 1.15422 / KT0803) (Gramella forsetii)).